Consider the following 431-residue polypeptide: Serine--tRNA ligase (431 aa).

Residue 238–240 (TAE) participates in L-serine binding. 269-271 (RSE) is a binding site for ATP. L-serine is bound at residue Glu-292. 356 to 359 (EISS) provides a ligand contact to ATP. L-serine is bound at residue Ser-392.

It belongs to the class-II aminoacyl-tRNA synthetase family. Type-1 seryl-tRNA synthetase subfamily. As to quaternary structure, homodimer. The tRNA molecule binds across the dimer.

It is found in the cytoplasm. The enzyme catalyses tRNA(Ser) + L-serine + ATP = L-seryl-tRNA(Ser) + AMP + diphosphate + H(+). It catalyses the reaction tRNA(Sec) + L-serine + ATP = L-seryl-tRNA(Sec) + AMP + diphosphate + H(+). Its pathway is aminoacyl-tRNA biosynthesis; selenocysteinyl-tRNA(Sec) biosynthesis; L-seryl-tRNA(Sec) from L-serine and tRNA(Sec): step 1/1. In terms of biological role, catalyzes the attachment of serine to tRNA(Ser). Is also able to aminoacylate tRNA(Sec) with serine, to form the misacylated tRNA L-seryl-tRNA(Sec), which will be further converted into selenocysteinyl-tRNA(Sec). The polypeptide is Serine--tRNA ligase (Pectobacterium carotovorum subsp. carotovorum (strain PC1)).